The chain runs to 147 residues: 3-dehydroquinate dehydratase (147 aa).

Residue Tyr-23 is the Proton acceptor of the active site. The substrate site is built by Asn-74, His-80, and Asp-87. His-100 acts as the Proton donor in catalysis. Substrate contacts are provided by residues 101–102 and Arg-111; that span reads LS.

It belongs to the type-II 3-dehydroquinase family. In terms of assembly, homododecamer.

The enzyme catalyses 3-dehydroquinate = 3-dehydroshikimate + H2O. It functions in the pathway metabolic intermediate biosynthesis; chorismate biosynthesis; chorismate from D-erythrose 4-phosphate and phosphoenolpyruvate: step 3/7. Catalyzes a trans-dehydration via an enolate intermediate. This is 3-dehydroquinate dehydratase from Glaesserella parasuis serovar 5 (strain SH0165) (Haemophilus parasuis).